A 357-amino-acid chain; its full sequence is MGSLETERKIVGWAATDSTGHLAPYTYSLRDTGPEDVFIKVISCGVCHTDIHQIKNDLGMSHYPMVPGHEVVGEVVEVGSDVTRFKVGDVVGVGVIVGSCKNCHPCKSEIEQYCNKKIWSYNDVYTDGKPTQGGFAESMVVHQKFVVRIPDGMSPEQAAPLLCAGLTVYSPLKHFGLKQSGLRGGILGLGGVGHMGVKIAKAMGHHVTVISSSDKKREEAMEHLGADEYLVSSDVESMQKAADQLDYIIDTVPVVHPLEPYLSLLKLDGKLILMGVINAPLQFVTPMVMLGRKSITGSFIGSMKETEEMLEFCKEKGVASMIEVIKMDYINTAFERLEKNDVRYRFVVDVAGSKLIH.

Cys47 lines the Zn(2+) pocket. Residue Thr49 coordinates NADP(+). Residues His69, Glu70, Cys100, Cys103, Cys106, Cys114, and Cys163 each coordinate Zn(2+). NADP(+) contacts are provided by residues Thr167, 188–193 (GLGGVG), 211–216 (SSSDKK), Thr251, Gly275, and 298–300 (SFI).

It belongs to the zinc-containing alcohol dehydrogenase family. As to quaternary structure, homodimer. Zn(2+) is required as a cofactor.

It catalyses the reaction (E)-cinnamyl alcohol + NADP(+) = (E)-cinnamaldehyde + NADPH + H(+). It carries out the reaction (E)-coniferol + NADP(+) = (E)-coniferaldehyde + NADPH + H(+). The catalysed reaction is (E)-sinapyl alcohol + NADP(+) = (E)-sinapaldehyde + NADPH + H(+). The enzyme catalyses (E)-4-coumaroyl alcohol + NADP(+) = (E)-4-coumaraldehyde + NADPH + H(+). It catalyses the reaction (E)-caffeyl alcohol + NADP(+) = (E)-caffeyl aldehyde + NADPH + H(+). It participates in aromatic compound metabolism; phenylpropanoid biosynthesis. In terms of biological role, involved in lignin biosynthesis. Catalyzes the final step specific for the production of lignin monomers. Catalyzes the NADPH-dependent reduction of coniferaldehyde, 5-hydroxyconiferaldehyde, sinapaldehyde, 4-coumaraldehyde and caffeyl aldehyde to their respective alcohols. The chain is Probable cinnamyl alcohol dehydrogenase from Populus deltoides (Eastern poplar).